The following is a 452-amino-acid chain: Solute carrier family 52, riboflavin transporter, member 3-B (452 aa).

The next 5 membrane-spanning stretches (helical) occupy residues 11–31 (LFGI…PLIV), 38–58 (WLLP…PLFI), 73–93 (PVIY…AFLW), 111–131 (LSFL…PFMM), and 138–158 (LTTY…VALV). N-linked (GlcNAc...) asparagine glycosylation is found at asparagine 168, asparagine 174, asparagine 179, and asparagine 193. Transmembrane regions (helical) follow at residues 199–219 (FFLF…LLNL), 285–305 (VFIF…LPSV), 321–341 (AATL…FVPI), 344–364 (LVLM…IMAM), 381–401 (ALIV…KVII), and 412–432 (ALVW…LSMF).

Belongs to the riboflavin transporter family.

The protein localises to the cell membrane. The enzyme catalyses riboflavin(in) = riboflavin(out). Functionally, plasma membrane transporter mediating the uptake by cells of the water soluble vitamin B2/riboflavin that plays a key role in biochemical oxidation-reduction reactions of the carbohydrate, lipid, and amino acid metabolism. In Danio rerio (Zebrafish), this protein is Solute carrier family 52, riboflavin transporter, member 3-B (slc52a3b).